Here is a 1023-residue protein sequence, read N- to C-terminus: Transmembrane protein 132A (1023 aa).

The signal sequence occupies residues Met1–Asp35. The Extracellular portion of the chain corresponds to Cys36–Ala852. The segment at Ala212 to Gln246 is disordered. N-linked (GlcNAc...) asparagine glycosylation occurs at Asn280. Disordered regions lie at residues Trp512–Glu533 and Leu766–Ala839. Low complexity predominate over residues Pro515–Glu527. Phosphoserine; by FAM20C is present on Ser529. The tract at residues Ile611–Pro916 is binds to HSPA5/GRP78. Residues Leu671–Ser1023 form a confers cellular localization similar to full-length form region. A compositionally biased stretch (low complexity) spans Ser778–Thr790. Over residues Gly809–Thr823 the composition is skewed to basic and acidic residues. Residues Glu824–Met836 are compositionally biased toward acidic residues. The chain crosses the membrane as a helical span at residues Leu853–Leu873. The Cytoplasmic segment spans residues Arg874–Ser1023. A disordered region spans residues Leu905–Lys961.

This sequence belongs to the TMEM132 family. Interacts with HSPA5/GRP78.

The protein localises to the golgi apparatus membrane. It localises to the endoplasmic reticulum membrane. May play a role in embryonic and postnatal development of the brain. Increased resistance to cell death induced by serum starvation in cultured cells. Regulates cAMP-induced GFAP gene expression via STAT3 phosphorylation. The protein is Transmembrane protein 132A (TMEM132A) of Homo sapiens (Human).